The sequence spans 262 residues: Outer membrane protein assembly factor BamD (262 aa).

The first 18 residues, 1–18 (MRKIKSLALLAVAALVIG), serve as a signal peptide directing secretion. The N-palmitoyl cysteine moiety is linked to residue cysteine 19. Cysteine 19 carries S-diacylglycerol cysteine lipidation.

The protein belongs to the BamD family. As to quaternary structure, part of the Bam complex.

The protein localises to the cell outer membrane. Part of the outer membrane protein assembly complex, which is involved in assembly and insertion of beta-barrel proteins into the outer membrane. The chain is Outer membrane protein assembly factor BamD from Haemophilus influenzae (strain ATCC 51907 / DSM 11121 / KW20 / Rd).